The primary structure comprises 66 residues: Prokaryotic ubiquitin-like protein Pup (66 aa).

Positions Met-1–Ser-10 are enriched in low complexity. A disordered region spans residues Met-1–Asp-39. An ARC ATPase binding region spans residues Val-23–Phe-60. Gln-66 carries the deamidated glutamine modification. An Isoglutamyl lysine isopeptide (Gln-Lys) (interchain with K-? in acceptor proteins) cross-link involves residue Gln-66.

The protein belongs to the prokaryotic ubiquitin-like protein family. Strongly interacts with the proteasome-associated ATPase ARC through a hydrophobic interface; the interacting region of Pup lies in its C-terminal half. There is one Pup binding site per ARC hexamer ring. Is modified by deamidation of its C-terminal glutamine to glutamate by the deamidase Dop, a prerequisite to the subsequent pupylation process.

It functions in the pathway protein degradation; proteasomal Pup-dependent pathway. Protein modifier that is covalently attached to lysine residues of substrate proteins, thereby targeting them for proteasomal degradation. The tagging system is termed pupylation. This is Prokaryotic ubiquitin-like protein Pup from Renibacterium salmoninarum (strain ATCC 33209 / DSM 20767 / JCM 11484 / NBRC 15589 / NCIMB 2235).